The sequence spans 253 residues: MRKPIIAGNWKMHKTLTEAVQFVEEVKGLVPPKAEVDSVICAPFLFLDRLVQNTNGTDLQIGAQTMHFADQGAYTGEVSPVMLKDLGVTYVILGHSERRQMFAETDETVNKKVLAAFTRGLVPIICCGETLEEREAGQTNAVVASQVEKALAGLTPDQVKQAVIAYEPIWAIGTGKSSTAEDANNVCGHIRSVVARLFGAEAAEAIRIQYGGSVKPENISDFLAQEHIDGALVGGASLEPASFLKLVEAGRHE.

9–11 (NWK) is a substrate binding site. The active-site Electrophile is H95. Residue E167 is the Proton acceptor of the active site. Substrate-binding positions include G173, S213, and 234–235 (GG). S213 carries the phosphoserine modification.

The protein belongs to the triosephosphate isomerase family. Homodimer.

The protein localises to the cytoplasm. The catalysed reaction is D-glyceraldehyde 3-phosphate = dihydroxyacetone phosphate. It participates in carbohydrate biosynthesis; gluconeogenesis. The protein operates within carbohydrate degradation; glycolysis; D-glyceraldehyde 3-phosphate from glycerone phosphate: step 1/1. Functionally, involved in the gluconeogenesis. Catalyzes stereospecifically the conversion of dihydroxyacetone phosphate (DHAP) to D-glyceraldehyde-3-phosphate (G3P). This is Triosephosphate isomerase from Geobacillus thermodenitrificans (strain NG80-2).